The primary structure comprises 163 residues: Phosphopantetheine adenylyltransferase (163 aa).

Substrate is bound at residue Thr10. Residues 10–11 (TF) and His18 contribute to the ATP site. Residues Lys42, Leu74, and Arg88 each contribute to the substrate site. Residues 89–91 (GLR), Glu99, and 124–130 (NSFISST) each bind ATP.

It belongs to the bacterial CoaD family. As to quaternary structure, homohexamer. It depends on Mg(2+) as a cofactor.

The protein localises to the cytoplasm. It carries out the reaction (R)-4'-phosphopantetheine + ATP + H(+) = 3'-dephospho-CoA + diphosphate. It participates in cofactor biosynthesis; coenzyme A biosynthesis; CoA from (R)-pantothenate: step 4/5. Reversibly transfers an adenylyl group from ATP to 4'-phosphopantetheine, yielding dephospho-CoA (dPCoA) and pyrophosphate. In Shewanella sp. (strain MR-4), this protein is Phosphopantetheine adenylyltransferase.